The following is a 1040-amino-acid chain: Multidrug resistance protein MdtB (1040 aa).

12 helical membrane-spanning segments follow: residues 16–36 (FIMR…AGII), 347–367 (LMMA…NIPA), 369–389 (IIPG…MVFL), 396–416 (LTLM…IVVI), 440–460 (IGFT…PLLF), 472–492 (FAIT…TLTP), 537–557 (WLTL…WVFI), 863–883 (LGST…VLGI), 888–908 (FIHP…ALLA), 911–931 (IAGS…IGIV), 968–988 (ILMT…STGV), and 998–1018 (IGMV…TPVI).

It belongs to the resistance-nodulation-cell division (RND) (TC 2.A.6) family. MdtB subfamily. Part of a tripartite efflux system composed of MdtA, MdtB and MdtC. MdtB forms a heteromultimer with MdtC.

It localises to the cell inner membrane. Functionally, the MdtABC tripartite complex confers resistance against novobiocin and deoxycholate. This chain is Multidrug resistance protein MdtB, found in Escherichia fergusonii (strain ATCC 35469 / DSM 13698 / CCUG 18766 / IAM 14443 / JCM 21226 / LMG 7866 / NBRC 102419 / NCTC 12128 / CDC 0568-73).